Consider the following 285-residue polypeptide: HTH-type transcriptional regulator MurR (285 aa).

In terms of domain architecture, HTH rpiR-type spans Met-1–Ser-77. Positions Ser-37–Gln-56 form a DNA-binding region, H-T-H motif. Residues Ile-128 to Val-268 enclose the SIS domain.

In terms of assembly, homotetramer.

It functions in the pathway amino-sugar metabolism; N-acetylmuramate degradation [regulation]. Represses the expression of the murPQ operon involved in the uptake and degradation of N-acetylmuramic acid (MurNAc). Binds to two adjacent inverted repeats within the operator region. MurNAc 6-phosphate, the substrate of MurQ, is the specific inducer that weakens binding of MurR to the operator. The chain is HTH-type transcriptional regulator MurR from Escherichia coli O17:K52:H18 (strain UMN026 / ExPEC).